We begin with the raw amino-acid sequence, 956 residues long: Replication factor C subunit 1 (956 aa).

2 stretches are compositionally biased toward basic and acidic residues: residues 1 to 15 and 50 to 74; these read MSDIRKWFMKAHEKG and TADRRKTSKYFGKDKTKVKDEKEVE. Disordered regions lie at residues 1 to 206 and 286 to 332; these read MSDI…TPDC and KKSL…AKGK. Residues 158–183 are compositionally biased toward gly residues; the sequence is RGRGGRAAPGASTGGRGRGGGRGGFM. Basic and acidic residues-rich tracts occupy residues 186–200 and 288–298; these read GERKDPPHKGEKEVP and SLPERSNKGTE. Residues 202–292 form the BRCT domain; sequence GTPDCLAGLT…KPVKKSLPER (91 aa). 399-406 contacts ATP; sequence SGTPGIGK. Residues 858–956 form a disordered region; the sequence is LEPTVDSLRD…GRGSGAKRKR (99 aa). Residues 866–892 show a composition bias toward acidic residues; that stretch reads RDEDGEPLADNEEGNGSDAEEDSEEAT. The span at 916-925 shows a compositional bias: low complexity; that stretch reads KGAGSSGSRK.

This sequence belongs to the activator 1 large subunit family. As to quaternary structure, heterotetramer of subunits RFC2, RFC3, RFC4 and RFC5 that can form a complex with RFC1. As to expression, expressed at high levels in flowers and siliques, and at lower levels in roots, stems and leaves.

The protein localises to the nucleus. Functionally, plays a role as mediator of transcriptional gene silencing (TGS), DNA replication, DNA repair, hypersensitive response (HR) and telomere length regulation. Is required in meiosis for DNA double-strand break (DSB) repair during meiotic homologous recombination. May participate in the RAD51-mediated recombination intermediate repair process. Is important for lagging strand synthesis. Promotes meiotic recombination via a specific pathway for crossovers (COs) that involves the formation of double Holliday Junction (dHJ) intermediates. The chain is Replication factor C subunit 1 (RFC1) from Arabidopsis thaliana (Mouse-ear cress).